The sequence spans 1827 residues: Sucrase-isomaltase, intestinal (1827 aa).

Topologically, residues 2-12 (AKRKFSGLEIT) are cytoplasmic. S7 carries the post-translational modification Phosphoserine; by PKA. The helical; Signal-anchor for type II membrane protein transmembrane segment at 13–32 (LIVLFVIVFIIAIALIAVLA) threads the bilayer. At 33–1827 (TKTPAVEEVN…LDDPIEISWS (1795 aa)) the chain is on the lumenal side. The disordered stretch occupies residues 39-64 (EEVNPSSSTPTTTSTTTSTSGSVSCP). Residues 43-64 (PSSSTPTTTSTTTSTSGSVSCP) show a composition bias toward low complexity. The P-type 1 domain occupies 61–110 (VSCPSELNEVVNERINCIPEQSPTQAICAQRNCCWRPWNNSDIPWCFFVD). Intrachain disulfides connect C63–C94, C77–C93, and C88–C106. N-linked (GlcNAc...) asparagine glycosylation occurs at N99. The segment at 110-1007 (DNHGYNVEGM…DLQLNPTRTR (898 aa)) is isomaltase. Substrate-binding residues include D264 and D388. Residues Y391 and Y400 each carry the sulfotyrosine modification. The N-linked (GlcNAc...) asparagine glycan is linked to N455. D505 functions as the Nucleophile; for isomaltase activity in the catalytic mechanism. C520 and C545 form a disulfide bridge. Position 588 (R588) interacts with substrate. D604 acts as the For isomaltase activity in catalysis. Cysteines 635 and 646 form a disulfide. H662 contacts substrate. N-linked (GlcNAc...) asparagine glycosylation is found at N859, N896, and N904. The 47-residue stretch at 932–978 (DQTFLESEKITCYPDADIATQEKCTQRGCIWDTNTVNPRAPECYFPK) folds into the P-type 2 domain. The sucrase stretch occupies residues 1008–1827 (ITLPSEPITN…LDDPIEISWS (820 aa)). N-linked (GlcNAc...) asparagine glycans are attached at residues N1235, N1303, N1325, N1340, N1354, and N1368. 2 positions are modified to sulfotyrosine: Y1382 and Y1385. D1394 (nucleophile; for sucrase activity) is an active-site residue. E1397 acts as the For sucrase activity in catalysis. N-linked (GlcNAc...) asparagine glycosylation is present at N1403. D1500 (proton donor; for sucrase activity) is an active-site residue. 5 N-linked (GlcNAc...) asparagine glycosylation sites follow: N1535, N1572, N1748, N1763, and N1799.

Belongs to the glycosyl hydrolase 31 family. In terms of assembly, the resulting sucrase and isomaltase subunits stay associated with one another in a complex by non-covalent linkages. In terms of processing, the precursor is proteolytically cleaved when exposed to pancreatic proteases in the intestinal lumen. N- and O-glycosylated. Post-translationally, sulfated.

It localises to the apical cell membrane. It catalyses the reaction Hydrolysis of sucrose and maltose by an alpha-D-glucosidase-type action.. The enzyme catalyses Hydrolysis of (1-&gt;6)-alpha-D-glucosidic linkages in some oligosaccharides produced from starch and glycogen by alpha-amylase, and in isomaltose.. Its function is as follows. Plays an important role in the final stage of carbohydrate digestion. Isomaltase activity is specific for both alpha-1,4- and alpha-1,6-oligosaccharides. The chain is Sucrase-isomaltase, intestinal (SI) from Oryctolagus cuniculus (Rabbit).